Consider the following 282-residue polypeptide: ATP synthase gamma chain (282 aa).

The protein belongs to the ATPase gamma chain family. F-type ATPases have 2 components, CF(1) - the catalytic core - and CF(0) - the membrane proton channel. CF(1) has five subunits: alpha(3), beta(3), gamma(1), delta(1), epsilon(1). CF(0) has three main subunits: a, b and c.

It localises to the cell membrane. In terms of biological role, produces ATP from ADP in the presence of a proton gradient across the membrane. The gamma chain is believed to be important in regulating ATPase activity and the flow of protons through the CF(0) complex. In Clostridium acetobutylicum (strain ATCC 824 / DSM 792 / JCM 1419 / IAM 19013 / LMG 5710 / NBRC 13948 / NRRL B-527 / VKM B-1787 / 2291 / W), this protein is ATP synthase gamma chain.